Reading from the N-terminus, the 567-residue chain is Glutathione/L-cysteine transport system ATP-binding/permease protein CydC (567 aa).

A run of 6 helical transmembrane segments spans residues 14–34, 44–64, 130–150, 156–176, 240–260, and 266–286; these read ILTL…MQAE, FNGK…IAFI, FLPK…YVFF, AIIL…LGLV, SFAL…FLGL, and DILL…FLPV. Residues 17-298 form the ABC transmembrane type-1 domain; the sequence is LITCLTLIQT…VGNDYHATLN (282 aa). In terms of domain architecture, ABC transporter spans 321-561; the sequence is LQLEAWSDQD…NGVYTKLVKA (241 aa). Residue 360–367 participates in ATP binding; it reads GASGAGKS.

The protein belongs to the ABC transporter superfamily. Cysteine exporter (TC 3.A.1.129.1) family. Forms a heterodimer with CydD.

The protein localises to the cell membrane. The catalysed reaction is L-cysteine(in) + ATP + H2O = L-cysteine(out) + ADP + phosphate + H(+). It catalyses the reaction glutathione(in) + ATP + H2O = glutathione(out) + ADP + phosphate + H(+). Its function is as follows. Part of the ABC transporter complex CydDC that exports the reduced low-molecular-weight thiols cysteine and glutathione from the cell. Export of these thiol-containing redox-active molecules may be crucial for redox homeostasis, permitting correct assembly of various respiratory complexes and formation of correct disulfide bonds in secreted proteins. CydC contains transmembrane domains (TMD), which form a pore in the membrane, and an ATP-binding domain (NBD), which is responsible for energy generation. The protein is Glutathione/L-cysteine transport system ATP-binding/permease protein CydC (cydC) of Bacillus subtilis (strain 168).